A 277-amino-acid chain; its full sequence is Undecaprenyl-diphosphatase (277 aa).

Helical transmembrane passes span 47–67, 85–105, 108–128, 183–203, 218–238, and 249–269; these read FNII…RGKI, ANLL…ADLI, WLFN…VMLW, AATE…AVYS, VFAV…RALL, and FAWY…FHLI.

Belongs to the UppP family.

The protein resides in the cell inner membrane. It catalyses the reaction di-trans,octa-cis-undecaprenyl diphosphate + H2O = di-trans,octa-cis-undecaprenyl phosphate + phosphate + H(+). Its function is as follows. Catalyzes the dephosphorylation of undecaprenyl diphosphate (UPP). Confers resistance to bacitracin. This Pseudomonas aeruginosa (strain UCBPP-PA14) protein is Undecaprenyl-diphosphatase.